The sequence spans 535 residues: CTP synthase (535 aa).

Positions 1–268 are amidoligase domain; the sequence is MSTKYIFVTG…DQIVCDHLKL (268 aa). S14 provides a ligand contact to CTP. Position 14 (S14) interacts with UTP. 15–20 contributes to the ATP binding site; the sequence is SMGKGI. Y55 provides a ligand contact to L-glutamine. D72 contacts ATP. 2 residues coordinate Mg(2+): D72 and E142. Residues 149–151, 189–194, and K225 contribute to the CTP site; these read DME and KTKIAQ. Residues 189 to 194 and K225 contribute to the UTP site; that span reads KTKIAQ. A Glutamine amidotransferase type-1 domain is found at 293–535; sequence KIALVGKYVE…FIRVAVENSK (243 aa). G355 provides a ligand contact to L-glutamine. Catalysis depends on C382, which acts as the Nucleophile; for glutamine hydrolysis. L-glutamine contacts are provided by residues 383-386, E406, and R464; that span reads LGMQ. Active-site residues include H509 and E511.

Belongs to the CTP synthase family. Homotetramer.

It carries out the reaction UTP + L-glutamine + ATP + H2O = CTP + L-glutamate + ADP + phosphate + 2 H(+). It catalyses the reaction L-glutamine + H2O = L-glutamate + NH4(+). The catalysed reaction is UTP + NH4(+) + ATP = CTP + ADP + phosphate + 2 H(+). The protein operates within pyrimidine metabolism; CTP biosynthesis via de novo pathway; CTP from UDP: step 2/2. Its activity is regulated as follows. Allosterically activated by GTP, when glutamine is the substrate; GTP has no effect on the reaction when ammonia is the substrate. The allosteric effector GTP functions by stabilizing the protein conformation that binds the tetrahedral intermediate(s) formed during glutamine hydrolysis. Inhibited by the product CTP, via allosteric rather than competitive inhibition. In terms of biological role, catalyzes the ATP-dependent amination of UTP to CTP with either L-glutamine or ammonia as the source of nitrogen. Regulates intracellular CTP levels through interactions with the four ribonucleotide triphosphates. The polypeptide is CTP synthase (Lactococcus lactis subsp. lactis (strain IL1403) (Streptococcus lactis)).